Consider the following 1047-residue polypeptide: FACT complex subunit SPT16 (1047 aa).

An N-acetylalanine modification is found at Ala2. The residue at position 139 (Lys139) is an N6-acetyllysine. At Ser188 the chain carries Phosphoserine. N6-acetyllysine is present on residues Lys196 and Lys223. Ser455 is subject to Phosphoserine. Residues 465–507 (RNEMTAEEKRRAHQKELAAQLNEEAKRRLTEQKGEQQIQKARK) are a coiled coil. A disordered region spans residues 491-518 (RRLTEQKGEQQIQKARKSNVSYKNPSLM). Lys497 participates in a covalent cross-link: Glycyl lysine isopeptide (Lys-Gly) (interchain with G-Cter in SUMO2). Residues 499 to 514 (EQQIQKARKSNVSYKN) are compositionally biased toward polar residues. Residue Ser508 is modified to Phosphoserine. Lys513 carries the N6-acetyllysine; alternate modification. Lys513 participates in a covalent cross-link: Glycyl lysine isopeptide (Lys-Gly) (interchain with G-Cter in SUMO2); alternate. Lys647 is covalently cross-linked (Glycyl lysine isopeptide (Lys-Gly) (interchain with G-Cter in SUMO2)). A phosphoserine mark is found at Ser650 and Ser658. N6-acetyllysine occurs at positions 732 and 786. Phosphothreonine is present on Thr903. At Lys904 the chain carries N6-acetyllysine. The interval 918 to 1047 (EQGGWSFLEP…SSAPPKKKRK (130 aa)) is disordered. Positions 927 to 973 (PEGEGSDAEDGDSESEIEDETFNPSEDDYEEEEEDSDEDYSSEAEES) are enriched in acidic residues. 4 positions are modified to phosphoserine: Ser979, Ser982, Ser986, and Ser1015. The segment covering 985 to 1005 (ESGKDWDELEEEARKADRESR) has biased composition (basic and acidic residues). A compositionally biased stretch (low complexity) spans 1024–1039 (VHSSGRGSNRGSRHSS).

It belongs to the peptidase M24 family. SPT16 subfamily. Interacts with MYOG (via C-terminal region). Component of the FACT complex, a stable heterodimer of SSRP1 and SUPT16H. Also a component of a CK2-SPT16-SSRP1 complex which forms following UV irradiation, composed of SSRP1, SUPT16H, CSNK2A1, CSNK2A2 and CSNK2B. Interacts with NEK9. Binds to histone H2A-H2B. Identified in a centromere complex containing histones H2A, H2B and H4, and at least CENPA, CENPB, CENPC, CENPT, CENPN, HJURP, SUPT16H, SSRP1 and RSF1. Interacts with GTF2E2. In terms of processing, ADP-ribosylated. ADP-ribosylation by PARP1 is induced by genotoxic stress and correlates with dissociation of FACT from chromatin. Widely expressed. Expressed in brain, liver, heart, kidneys, lungs, spleen, thymus, ovary, and testes, with highest levels of expression observed in thymus.

Its subcellular location is the nucleus. It localises to the chromosome. Its function is as follows. Component of the FACT complex, a general chromatin factor that acts to reorganize nucleosomes. The FACT complex is involved in multiple processes that require DNA as a template such as mRNA elongation, DNA replication and DNA repair. During transcription elongation the FACT complex acts as a histone chaperone that both destabilizes and restores nucleosomal structure. It facilitates the passage of RNA polymerase II and transcription by promoting the dissociation of one histone H2A-H2B dimer from the nucleosome, then subsequently promotes the reestablishment of the nucleosome following the passage of RNA polymerase II. The FACT complex is probably also involved in phosphorylation of 'Ser-392' of p53/TP53 via its association with CK2 (casein kinase II). The sequence is that of FACT complex subunit SPT16 (Supt16h) from Mus musculus (Mouse).